The sequence spans 293 residues: 33 kDa chaperonin (293 aa).

2 disulfide bridges follow: Cys230–Cys232 and Cys263–Cys266.

The protein belongs to the HSP33 family. Post-translationally, under oxidizing conditions two disulfide bonds are formed involving the reactive cysteines. Under reducing conditions zinc is bound to the reactive cysteines and the protein is inactive.

It is found in the cytoplasm. Its function is as follows. Redox regulated molecular chaperone. Protects both thermally unfolding and oxidatively damaged proteins from irreversible aggregation. Plays an important role in the bacterial defense system toward oxidative stress. The protein is 33 kDa chaperonin of Edwardsiella ictaluri (strain 93-146).